A 789-amino-acid polypeptide reads, in one-letter code: Tax1-binding protein 1 (789 aa).

Phosphoserine occurs at positions 124, 138, and 225. Residues 144–599 (TTKAGLLELK…LKRSLENPAE (456 aa)) adopt a coiled-coil conformation. Residues 320-420 (EEIGRLQLCL…ELKLNAMKKD (101 aa)) are oligomerization. Polar residues predominate over residues 481–502 (TGNQQKVNDASVNTDPATSAST). The interval 481-508 (TGNQQKVNDASVNTDPATSASTVDVKPS) is disordered. Residue S593 is modified to Phosphoserine; by IKKA. At S609 the chain carries Phosphoserine. The segment at 639–660 (YASQETRDGADGAFYPDEIQRP) is disordered. S666 carries the phosphoserine; by IKKA modification. The segment at 678-712 (PARNFSRPDGLEDSEDSKEDENVPTAPDPPSQHLR) is disordered. UBZ1-type zinc fingers lie at residues 727-753 (HKKC…VESH) and 754-780 (WKVC…VQTH). Zn(2+)-binding residues include C730, C733, H749, H753, C757, C760, H776, and H780.

Homooligomer. Interacts with TNFAIP3. Interacts with STARD13. Interacts with MYO6. Interacts with TOM1; the interaction is indirect and is mediated by MYO6, which acts as a bridge between TOM1 and TAX1BP1. Interacts with MAVS; this interaction induces MAVS polyubiquitination. Interacts with TNIP1. Interacts with TRAF6; this interaction mediates deubiquitination of TRAF6 and inhibition of NF-kappa-B activation. Interacts with RIPK1; this interaction negatively regulates RIPK1 ubiquitination. Interacts with NBR1. Interacts with TBK1. Interacts with RB1CC1. Interacts with SQSTM1. Interacts with AZI2. Interacts with TICAM1 and TRIM32; these interactions target TICAM1 to TAX1BP1-mediated selective autophagic degradation. As to quaternary structure, (Microbial infection) Interacts with the HTLV-1 protein Tax. In terms of assembly, (Microbial infection) Interacts with Respiratory syncytial virus protein N; this interaction may promote viral growth by inhibiting the innate immune response. (Microbial infection) Interacts with Lassa virus protein Z. As to quaternary structure, (Microbial infection) Interacts with Mopeia virus protein Z. Phosphorylated in the C-terminal region by CHUK/IKKA leading to NF-kappa-B signaling down-regulation. As to expression, expressed in all tissues tested.

It is found in the cytoplasm. It localises to the mitochondrion. The protein localises to the preautophagosomal structure. The protein resides in the cytoplasmic vesicle. Its subcellular location is the autophagosome. Ubiquitin-binding adapter that participates in inflammatory, antiviral and innate immune processes as well as selective autophagy regulation. Plays a key role in the negative regulation of NF-kappa-B and IRF3 signalings by acting as an adapter for the ubiquitin-editing enzyme A20/TNFAIP3 to bind and inactivate its substrates. Disrupts the interactions between the E3 ubiquitin ligase TRAF3 and TBK1/IKBKE to attenuate 'Lys63'-linked polyubiquitination of TBK1 and thereby IFN-beta production. Also recruits A20/TNFAIP3 to ubiquitinated signaling proteins TRAF6 and RIPK1, leading to their deubiquitination and disruption of IL-1 and TNF-induced NF-kappa-B signaling pathways. Inhibits virus-induced apoptosis by inducing the 'Lys-48'-linked polyubiquitination and degradation of MAVS via recruitment of the E3 ligase ITCH, thereby attenuating MAVS-mediated apoptosis signaling. As a macroautophagy/autophagy receptor, facilitates the xenophagic clearance of pathogenic bacteria such as Salmonella typhimurium and Mycobacterium tuberculosis. Upon NBR1 recruitment to the SQSTM1-ubiquitin condensates, acts as the major recruiter of RB1CC1 to these ubiquitin condensates to promote their autophagic degradation. Mediates the autophagic degradation of other substrates including TICAM1. The sequence is that of Tax1-binding protein 1 (TAX1BP1) from Homo sapiens (Human).